Here is a 333-residue protein sequence, read N- to C-terminus: Electron transfer flavoprotein subunit alpha, mitochondrial (333 aa).

A mitochondrion-targeting transit peptide spans 1–19 (MFRAAAPGQLRRAASLLRF). Positions 20–204 (QSTLVIAEHA…EISEWLDQKL (185 aa)) are domain I. N6-acetyllysine; alternate is present on lysine 59. The residue at position 59 (lysine 59) is an N6-succinyllysine; alternate. Lysine 62 carries the N6-acetyllysine modification. Lysine 69 bears the N6-acetyllysine; alternate mark. Residue lysine 69 is modified to N6-succinyllysine; alternate. Lysine 75 bears the N6-acetyllysine mark. Lysine 85 carries the post-translational modification N6-acetyllysine; alternate. At lysine 85 the chain carries N6-succinyllysine; alternate. A Phosphothreonine modification is found at threonine 93. Residues lysine 101 and lysine 139 each carry the N6-acetyllysine modification. Position 140 is a phosphoserine (serine 140). The residue at position 158 (lysine 158) is an N6-acetyllysine; alternate. Residue lysine 158 is modified to N6-succinyllysine; alternate. Lysine 164 carries the N6-acetyllysine modification. The residue at position 187 (lysine 187) is an N6-succinyllysine. The residue at position 203 (lysine 203) is an N6-acetyllysine; alternate. Lysine 203 is subject to N6-succinyllysine; alternate. Residues 205-333 (TKSDRPELTG…PEMTEILKKK (129 aa)) are domain II. N6-succinyllysine is present on lysine 216. Arginine 223 contacts FAD. 2 positions are modified to N6-acetyllysine; alternate: lysine 226 and lysine 232. Residues lysine 226 and lysine 232 each carry the N6-succinyllysine; alternate modification. FAD-binding positions include serine 248, 263-266 (VGQT), 281-286 (SGAIQH), and asparagine 300. At lysine 301 the chain carries N6-succinyllysine. 318–319 (DL) is an FAD binding site.

Belongs to the ETF alpha-subunit/FixB family. In terms of assembly, heterodimer composed of ETFA and ETFB. Identified in a complex that contains ETFA, ETFB and ETFRF1. Interaction with ETFRF1 promotes dissociation of the bound FAD and loss of electron transfer activity. Interacts with TASOR. FAD is required as a cofactor. The N-terminus is blocked.

It localises to the mitochondrion matrix. Its function is as follows. Heterodimeric electron transfer flavoprotein that accepts electrons from several mitochondrial dehydrogenases, including acyl-CoA dehydrogenases, glutaryl-CoA and sarcosine dehydrogenase. It transfers the electrons to the main mitochondrial respiratory chain via ETF-ubiquinone oxidoreductase (ETF dehydrogenase). Required for normal mitochondrial fatty acid oxidation and normal amino acid metabolism. In Homo sapiens (Human), this protein is Electron transfer flavoprotein subunit alpha, mitochondrial (ETFA).